Consider the following 269-residue polypeptide: 4-hydroxy-tetrahydrodipicolinate reductase (269 aa).

NAD(+)-binding positions include 8-13 (GAAGRM) and E34. Residue R35 participates in NADP(+) binding. Residues 98–100 (GTT) and 122–125 (APNY) each bind NAD(+). The Proton donor/acceptor role is filled by H155. (S)-2,3,4,5-tetrahydrodipicolinate is bound at residue H156. The active-site Proton donor is the K159. Residue 165–166 (GT) participates in (S)-2,3,4,5-tetrahydrodipicolinate binding.

It belongs to the DapB family.

The protein localises to the cytoplasm. It carries out the reaction (S)-2,3,4,5-tetrahydrodipicolinate + NAD(+) + H2O = (2S,4S)-4-hydroxy-2,3,4,5-tetrahydrodipicolinate + NADH + H(+). The enzyme catalyses (S)-2,3,4,5-tetrahydrodipicolinate + NADP(+) + H2O = (2S,4S)-4-hydroxy-2,3,4,5-tetrahydrodipicolinate + NADPH + H(+). It functions in the pathway amino-acid biosynthesis; L-lysine biosynthesis via DAP pathway; (S)-tetrahydrodipicolinate from L-aspartate: step 4/4. Functionally, catalyzes the conversion of 4-hydroxy-tetrahydrodipicolinate (HTPA) to tetrahydrodipicolinate. This is 4-hydroxy-tetrahydrodipicolinate reductase from Vibrio campbellii (strain ATCC BAA-1116).